The sequence spans 281 residues: Non-selective voltage-gated ion channel 2 (281 aa).

Positions 11 and 19 each coordinate ATP.

The protein belongs to the eukaryotic mitochondrial porin family.

The protein resides in the mitochondrion outer membrane. Functionally, non-selective voltage-gated ion channel that mediates the transport of anions and cations through the mitochondrion outer membrane. The channel adopts an open conformation at low or zero membrane potential and a closed conformation at potentials above 30-40 mV. The open state has a weak anion selectivity whereas the closed state is cation-selective. Does not confer permeability to NADH. Its function is as follows. Catalyzes the scrambling of phospholipids across the outer mitochondrial membrane; the mechanism is unrelated to channel activity and is capable of translocating both anionic and zwitterionic phospholipids. The sequence is that of Non-selective voltage-gated ion channel 2 (POR2) from Saccharomyces cerevisiae (strain ATCC 204508 / S288c) (Baker's yeast).